Reading from the N-terminus, the 291-residue chain is MEEGLIDRLLETLWLDRRLSQNTLNGYRRDLEKIARRLSQSGRMLKDADEADLAAAVYVDGEQRSSQARALSACKRLYIWMEREGIRTDNPTRLLKPPKIDKNIPTLITEQQISRLLAAPDTDTPHGLRDKALLELMYATGLRVSEAVGLNFGNVDLDRGCITALGKGDKQRMVPMGQESAYWVERYYTEARPLLLKGRNCDALFVSQKKTGISRQLAWMIVKEYASQAGIGHISPHSLRHAFATHLVRHGLDLRVVQDMLGHADLNTTQIYTHVANVWLQGVVKEHHSRN.

One can recognise a Core-binding (CB) domain in the interval 1-82 (MEEGLIDRLL…ACKRLYIWME (82 aa)). The Tyr recombinase domain occupies 103–285 (NIPTLITEQQ…ANVWLQGVVK (183 aa)). Catalysis depends on residues arginine 143, lysine 167, histidine 237, arginine 240, and histidine 263. Catalysis depends on tyrosine 272, which acts as the O-(3'-phospho-DNA)-tyrosine intermediate.

This sequence belongs to the 'phage' integrase family. XerD subfamily. Forms a cyclic heterotetrameric complex composed of two molecules of XerC and two molecules of XerD.

It localises to the cytoplasm. Site-specific tyrosine recombinase, which acts by catalyzing the cutting and rejoining of the recombining DNA molecules. The XerC-XerD complex is essential to convert dimers of the bacterial chromosome into monomers to permit their segregation at cell division. It also contributes to the segregational stability of plasmids. In Neisseria meningitidis serogroup B (strain ATCC BAA-335 / MC58), this protein is Tyrosine recombinase XerD.